The primary structure comprises 2156 residues: MLFFLDRMLAFPMNETFCCLWIACVFNSTLAQQGTESFQCDNGVSLPPDSICDFTDQCGDSSDERHCLNYERCDFEDGLCHMTQDQSLQPSWTKRSGMIGLSPPFYDHNGDVSAHFLSLVSRVDSISSSLRSRVFLPTNDQHDCQITFYYFSCQVSGKLMVGLQTACGGPIQHLWQNTAALPNQWERNVIKIQSSQRFQVVFEGQMASTYEQDEVIAIDDISFSSGCLPANDGILLCQEALNAERELCHPDTDLCRFDATDEELRLCQACGFEFDMCEWTSEASAGQISWMRTKAREIPAFESTPQQDQGGDDEGYYVWVGAKHGFTLNHLDSRAYLNSSVCHCLGKSCHLQFYYAMESSVLRVRLYNNKEEEIFWTYNISTHSQWVKADVLIPEDLKTFKIIFEGTLLSQRSFIALDHLWVYACGQTQSRKLCSADEFPCTSGQCIAKESVCDSRQDCSDESDEDPATCSKHLTCDFESGFCGWEPFLTEDSHWKLMKGLNNGEHHFPAADHTANINHGSFIYLEAQRSPGVAKLGSPVLTKLLTASTPCQVQFWYHLSQHSNLSVFTRTSLDGNLQKQGKIIRFSESQWSHAKIDLIAEAGESTLPFQLILEATVLSSNATVALDDISVSQECEISYKSLPRTSTQSKFSKCDFEANSCDWFEAISGDHFDWIRSSQSELSADFEHQAPPRDHSLNASQGHFMFILKKSSSLWQVAKLQSPTFSQTGPGCILSFWFYNYGLSVGAAELQLHMENSHDSTVIWRVLYNQGKQWLEATIQLGRLSQPFHLSLDKVSLGIYDGVSAIDDIRFENCTLPLPAESCEGLDHFWCRHTRACIEKLRLCDLVDDCGDRTDEVNCAPELQCNFETGICNWEQDAKDDFDWTRSQGPTPTLNTGPMKDNTLGTAKGHYLYIESSEPQAFQDSAALLSPILNATDTKGCTFRFYYHMFGKRIYRLAIYQRIWSDSRGQLLWQIFGNQGNRWIRKHLNISSRQPFQILVEASVGDGFTGDIAIDDLSFMDCTLYPGNLPADLPTPPETSVPVTLPPHNCTDNEFICRSDGHCIEKMQKCDFKYDCPDKSDEASCVMEVCSFEKRSLCKWYQPIPVHLLQDSNTFRWGLGNGISIHHGEENHRPSVDHTQNTTDGWYLYADSSNGKFGDTADILTPIISLTGPKCTLVFWTHMNGATVGSLQVLIKKDNVTSKLWAQTGQQGAQWKRAEVFLGIRSHTQIVFRAKRGISYIGDVAVDDISFQDCSPLLSPERKCTDHEFMCANKHCIAKDKLCDFVNDCADNSDETTFICRTSSGRCDFEFDLCSWKQEKDEDFDWNLKASSIPAAGTEPAADHTLGNSSGHYIFIKSLFPQQPMRAARISSPVISKRSKNCKIIFHYHMYGNGIGALTLMQVSVTNQTKVLLNLTVEQGNFWRREELSLFGDEDFQLKFEGRVGKGQRGDIALDDIVLTENCLSLHDSVQEELAVPLPTGFCPLGYRECHNGKCYRLEQSCNFVDNCGDNTDENECGSSCTFEKGWCGWQNSQADNFDWVLGVGSHQSLRPPKDHTLGNENGHFMYLEATAVGLRGDKAHFRSTMWRESSAACTMSFWYFVSAKATGSIQILIKTEKGLSKVWQESKQNPGNHWQKADILLGKLRNFEVIFQGIRTRDLGGGAAIDDIEFKNCTTVGEISELCPEITDFLCRDKKCIASHLLCDYKPDCSDRSDEAHCAHYTSTTGSCNFETSSGNWTTACSLTQDSEDDLDWAIGSRIPAKALIPDSDHTPGSGQHFLYVNSSGSKEGSVARITTSKSFPASLGMCTVRFWFYMIDPRSMGILKVYTIEESGLNILVWSVIGNKRTGWTYGSVPLSSNSPFKVAFEADLDGNEDIFIALDDISFTPECVTGGPVPVQPSPCEADQFSCIYTLQCVPLSGKCDGHEDCIDGSDEMDCPLSPTPPLCSNMEFPCSTDECIPSLLLCDGVPDCHFNEDELICSNKSCSNGALVCASSNSCIPAHQRCDGFADCMDFQLDESSCSECPLNYCRNGGTCVVEKNGPMCRCRQGWKGNRCHIKFNPPATDFTYAQNNTWTLLGIGLAFLMTHITVAVLCFLANRKVPIRKTEGSGNCAFVNPVYGNWSNPEKTESSVYSFSNPLYGTTSGSLETLSHHLK.

The N-terminal stretch at 1 to 31 (MLFFLDRMLAFPMNETFCCLWIACVFNSTLA) is a signal peptide. At 32-2076 (QQGTESFQCD…FTYAQNNTWT (2045 aa)) the chain is on the vesicular side. Positions 33 to 68 (QGTESFQCDNGVSLPPDSICDFTDQCGDSSDERHCL) constitute an LDL-receptor class A 1 domain. Intrachain disulfides connect Cys-40-Cys-58 and Cys-52-Cys-67. 2 consecutive MAM domains span residues 71-229 (ERCD…GCLP) and 268-427 (QACG…ACGQ). One can recognise an LDL-receptor class A 2 domain in the interval 433–471 (LCSADEFPCTSGQCIAKESVCDSRQDCSDESDEDPATCS). Disulfide bonds link Cys-434/Cys-446, Cys-441/Cys-459, and Cys-453/Cys-470. MAM domains follow at residues 474-637 (LTCD…ECEI) and 652-816 (SKCD…NCTL). Residue Asn-813 is glycosylated (N-linked (GlcNAc...) asparagine). The 39-residue stretch at 822–860 (SCEGLDHFWCRHTRACIEKLRLCDLVDDCGDRTDEVNCA) folds into the LDL-receptor class A 3 domain. 3 disulfides stabilise this stretch: Cys-823-Cys-837, Cys-831-Cys-850, and Cys-844-Cys-859. The MAM 5 domain occupies 863 to 1024 (LQCNFETGIC…DDLSFMDCTL (162 aa)). N-linked (GlcNAc...) asparagine glycosylation is present at Asn-1049. Residues 1049–1086 (NCTDNEFICRSDGHCIEKMQKCDFKYDCPDKSDEASCV) enclose the LDL-receptor class A 4 domain. Cystine bridges form between Cys-1050-Cys-1063, Cys-1057-Cys-1076, and Cys-1070-Cys-1085. The MAM 6 domain maps to 1088–1256 (EVCSFEKRSL…DDISFQDCSP (169 aa)). N-linked (GlcNAc...) asparagine glycosylation is present at Asn-1199. The LDL-receptor class A 5 domain occupies 1263–1301 (KCTDHEFMCANKHCIAKDKLCDFVNDCADNSDETTFICR). 3 disulfide bridges follow: Cys-1264/Cys-1276, Cys-1271/Cys-1289, and Cys-1283/Cys-1300. Positions 1305–1465 (GRCDFEFDLC…DIVLTENCLS (161 aa)) constitute an MAM 7 domain. Asn-1414 is a glycosylation site (N-linked (GlcNAc...) asparagine). Residues 1482 to 1518 (FCPLGYRECHNGKCYRLEQSCNFVDNCGDNTDENECG) form the LDL-receptor class A 6 domain. 3 disulfide bridges follow: Cys-1483–Cys-1495, Cys-1490–Cys-1508, and Cys-1502–Cys-1517. The 158-residue stretch at 1519-1676 (SSCTFEKGWC…DDIEFKNCTT (158 aa)) folds into the MAM 8 domain. The 38-residue stretch at 1683–1720 (LCPEITDFLCRDKKCIASHLLCDYKPDCSDRSDEAHCA) folds into the LDL-receptor class A 7 domain. Intrachain disulfides connect Cys-1684/Cys-1697, Cys-1692/Cys-1710, and Cys-1704/Cys-1719. The 166-residue stretch at 1727 to 1892 (GSCNFETSSG…DISFTPECVT (166 aa)) folds into the MAM 9 domain. LDL-receptor class A domains lie at 1902-1939 (PCEA…MDCP), 1946-1982 (LCSN…LICS), and 1985-2023 (SCSN…SSCS). 12 disulfides stabilise this stretch: Cys-1903/Cys-1916, Cys-1910/Cys-1929, Cys-1923/Cys-1938, Cys-1947/Cys-1959, Cys-1954/Cys-1972, Cys-1966/Cys-1981, Cys-1986/Cys-1999, Cys-1993/Cys-2012, Cys-2006/Cys-2022, Cys-2025/Cys-2036, Cys-2030/Cys-2045, and Cys-2047/Cys-2056. Residues 2024–2057 (ECPLNYCRNGGTCVVEKNGPMCRCRQGWKGNRCH) form the EGF-like domain. A helical transmembrane segment spans residues 2077-2097 (LLGIGLAFLMTHITVAVLCFL). Over 2098 to 2156 (ANRKVPIRKTEGSGNCAFVNPVYGNWSNPEKTESSVYSFSNPLYGTTSGSLETLSHHLK) the chain is Cytoplasmic.

In terms of assembly, interacts with FGF19. Strongly expressed in the small intestine.

It is found in the cytoplasmic vesicle membrane. Functionally, enhances production and/or transport of FGF19 and thus has a role in regulation of bile acid synthesis. The chain is MAM and LDL-receptor class A domain-containing protein 1 from Homo sapiens (Human).